Consider the following 264-residue polypeptide: MKAVLLVVAALFLAGSQARHFWQQDDPKTSWDVVKEFANKYVDAVKESGKGYVEQLDASSLGQQLNLRLSDNWDTLSTILTKLQADFGLATQEFWDTLEKETEWLKQIVSEDLQDVKHKVQPYLENFQKKVQEEVERYREKVRPLGIELRDGARQKLQELQEKLTPLGEDLRDRTREHVDVLRTQLAPFSEEMRQRLAKRLEELKDSATLADYHAKASEHLKMLGEKAKPALEDLRQGLLPVLENLKASILSSIDQASKQLAAQ.

A signal peptide spans 1–18; the sequence is MKAVLLVVAALFLAGSQA. A run of 2 repeats spans residues 67 to 88 and 89 to 110. Residues 67 to 264 are 10 X approximate tandem repeats; sequence LRLSDNWDTL…DQASKQLAAQ (198 aa). The stretch at 111 to 121 is one 3; half-length repeat; it reads EDLQDVKHKVQ. Tandem repeats lie at residues 122 to 143, 144 to 165, and 166 to 187. One copy of the 7; truncated repeat lies at 188–207; it reads PFSEEMRQRLAKRLEELKDS. M193 bears the Methionine sulfoxide mark. Repeat unit 8 spans residues 208-229; that stretch reads ATLADYHAKASEHLKMLGEKAK. One copy of the 9; half-length repeat lies at 230 to 240; sequence PALEDLRQGLL. The stretch at 241 to 264 is repeat 10; it reads PVLENLKASILSSIDQASKQLAAQ.

It belongs to the apolipoprotein A1/A4/E family. In terms of assembly, homodimer. Interacts with APOA1BP and CLU. Component of a sperm activating protein complex (SPAP), consisting of APOA1, an immunoglobulin heavy chain, an immunoglobulin light chain and albumin. Interacts with NDRG1. Interacts with SCGB3A2. Interacts with NAXE and YJEFN3. In terms of processing, glycosylated. Post-translationally, palmitoylated. Phosphorylation sites are present in the extracellular medium.

The protein localises to the secreted. In terms of biological role, participates in the reverse transport of cholesterol from tissues to the liver for excretion by promoting cholesterol efflux from tissues and by acting as a cofactor for the lecithin cholesterol acyltransferase (LCAT). As part of the SPAP complex, activates spermatozoa motility. This Cavia aperea (Brazilian guinea pig) protein is Apolipoprotein A-I (APOA1).